Consider the following 377-residue polypeptide: Probable G-protein coupled receptor F27E5.8 (377 aa).

Residues 1-34 (MSEQDSSSPKYMRFLLGNFTSAEMVTDGNFLIYC) are Extracellular-facing. A glycan (N-linked (GlcNAc...) asparagine) is linked at asparagine 18. The chain crosses the membrane as a helical span at residues 35–55 (IEMGLLVIGVLENIFMIGAVF). Residues 56-71 (STSCLHLNLRILICNC) lie on the Cytoplasmic side of the membrane. A helical transmembrane segment spans residues 72 to 92 (CLGFILMAVGRAMIAVPLCIA). The Extracellular portion of the chain corresponds to 93–105 (HLRDVDISSHAWC). Residues 106-126 (FIANAVHHSSADSVCLSFVFI) form a helical membrane-spanning segment. Over 127-144 (MLERTAGTIWSKDYEKTK) the chain is Cytoplasmic. The chain crosses the membrane as a helical span at residues 145 to 165 (IHIFPCIFAFLQWFIPMFMIL). Residues 166-195 (GNFLDRANRMEHFLLYPHLPCQIEYLTPTM) lie on the Extracellular side of the membrane. The helical transmembrane segment at 196-216 (FMITIFIIVIGFIASVGGITI) threads the bilayer. Topologically, residues 217–251 (VYNKNIKKYNTRDIWFNTVNLSERYQITENIRSTH) are cytoplasmic. A helical membrane pass occupies residues 252-272 (LLFPLLALMLIFSTLSVSVLI). Residues 273–303 (YGGYWVSVMTKEPARFEEVVKWFGRGGEAAQ) are Extracellular-facing. A helical transmembrane segment spans residues 304–324 (LFDIITAIYTISFPICAFICH). Residues 325 to 377 (PNLFRFLRKFIGWNSYAVRPSNLNEIGGFEMSTAPIRTQTEFHFQELSRQWNT) are Cytoplasmic-facing.

Belongs to the G-protein coupled receptor 1 family.

The protein resides in the cell membrane. In Caenorhabditis elegans, this protein is Probable G-protein coupled receptor F27E5.8.